The primary structure comprises 160 residues: MIRYIILGLLTLASAHGTTQKVDFKEPACNVTFAAEANECTTLIKCTTEHEKLLIRHKNKIGKYAVYAIWQPGDTTEYNVTVFQGKSHKTFMYTFPFYEMCDITMYMSKQYKLWPPQNCVENTGTFCCTAMLITVLALVCTLLYIKYKSRRSFIEEKKMP.

An N-terminal signal peptide occupies residues 1–17; the sequence is MIRYIILGLLTLASAHG. Residues 18 to 124 lie on the Lumenal side of the membrane; it reads TTQKVDFKEP…PPQNCVENTG (107 aa). 2 disulfide bridges follow: Cys29-Cys46 and Cys40-Cys101. N-linked (GlcNAc...) asparagine; by host glycans are attached at residues Asn30 and Asn79. A helical membrane pass occupies residues 125-145; that stretch reads TFCCTAMLITVLALVCTLLYI. The Cytoplasmic segment spans residues 146–160; that stretch reads KYKSRRSFIEEKKMP. A Di-lysine motif motif is present at residues 157 to 160; that stretch reads KKMP.

The protein belongs to the adenoviridae E19 family. Both disulfide bonds are absolutely critical for the interaction with MHC antigens. In terms of processing, N-glycosylated; high-mannose.

It is found in the host endoplasmic reticulum membrane. Binds and retains class I heavy chains in the endoplasmic reticulum during the early period of virus infection, thereby impairing their transport to the cell surface. Also delays the expression of class I alleles that it cannot affect by direct retention. Binds transporters associated with antigen processing (TAP) and acts as a tapasin inhibitor, preventing class I/TAP association. In consequence, infected cells are masked for immune recognition by cytotoxic T-lymphocytes. The sequence is that of Early E3 18.5 kDa glycoprotein from Homo sapiens (Human).